Here is a 186-residue protein sequence, read N- to C-terminus: Holliday junction branch migration complex subunit RuvA (186 aa).

The segment at 1 to 61 (MYRYIKGIVT…EDIFQLYGFK (61 aa)) is domain I. The tract at residues 62 to 134 (DEETLNLFLK…LKGKLVNDEL (73 aa)) is domain II. The segment at 134–137 (LDMQ) is flexible linker. A domain III region spans residues 138–186 (LLSDNSKDVAAALEALGYNKKEIAKSLKHVNFDQDLNKALKEALAILLK).

Belongs to the RuvA family. In terms of assembly, homotetramer. Forms an RuvA(8)-RuvB(12)-Holliday junction (HJ) complex. HJ DNA is sandwiched between 2 RuvA tetramers; dsDNA enters through RuvA and exits via RuvB. An RuvB hexamer assembles on each DNA strand where it exits the tetramer. Each RuvB hexamer is contacted by two RuvA subunits (via domain III) on 2 adjacent RuvB subunits; this complex drives branch migration. In the full resolvosome a probable DNA-RuvA(4)-RuvB(12)-RuvC(2) complex forms which resolves the HJ.

It localises to the cytoplasm. Functionally, the RuvA-RuvB-RuvC complex processes Holliday junction (HJ) DNA during genetic recombination and DNA repair, while the RuvA-RuvB complex plays an important role in the rescue of blocked DNA replication forks via replication fork reversal (RFR). RuvA specifically binds to HJ cruciform DNA, conferring on it an open structure. The RuvB hexamer acts as an ATP-dependent pump, pulling dsDNA into and through the RuvAB complex. HJ branch migration allows RuvC to scan DNA until it finds its consensus sequence, where it cleaves and resolves the cruciform DNA. The sequence is that of Holliday junction branch migration complex subunit RuvA from Acholeplasma laidlawii (strain PG-8A).